A 214-amino-acid chain; its full sequence is Uridine kinase (214 aa).

15-22 (GASASGKS) is an ATP binding site.

Belongs to the uridine kinase family.

The protein resides in the cytoplasm. The enzyme catalyses uridine + ATP = UMP + ADP + H(+). It carries out the reaction cytidine + ATP = CMP + ADP + H(+). It participates in pyrimidine metabolism; CTP biosynthesis via salvage pathway; CTP from cytidine: step 1/3. The protein operates within pyrimidine metabolism; UMP biosynthesis via salvage pathway; UMP from uridine: step 1/1. This Aeromonas hydrophila subsp. hydrophila (strain ATCC 7966 / DSM 30187 / BCRC 13018 / CCUG 14551 / JCM 1027 / KCTC 2358 / NCIMB 9240 / NCTC 8049) protein is Uridine kinase.